Consider the following 260-residue polypeptide: MEPMRSSCRYTEMQTVSYYEGYPSTNGDMNAYNANTAINSMYANNFPHDVHPNQARNGGHCYGSDSANSSPGESCREDELEHVLAPGFHGQGERRCLMWACKACKRKNVAVDKRKAATLRERRRLRKVNEAFEALKRHTCANPNQRLPKVEILRNAIEYIEKLERLLQVEKANGDSEMDSAETSSNTSDAMTDGSSPGSYSSDKAQQYGDGYDVSSPYGYNCGNASSLDCLSLIVESITPNKGKAITSPKKATSDGLCMV.

Residues D112–L163 form the bHLH domain. Residues K171–Y208 are disordered. The span at A181–A205 shows a compositional bias: polar residues.

As to quaternary structure, efficient DNA binding requires dimerization with another bHLH protein. Homodimer, and heterodimer with the ubiquitous bHLH protein E12.

The protein localises to the nucleus. Regulatory factor during embryogenesis. Conversion of pluripotent secondary mesenchyme cells to myogenic cells. It binds to the MCK enhancer element. This is Transcription factor SUM-1 (SUM-1) from Lytechinus variegatus (Green sea urchin).